A 352-amino-acid polypeptide reads, in one-letter code: Ribosomal lysine N-methyltransferase 5 (352 aa).

S-adenosyl-L-methionine-binding positions include Trp107, 161–163 (GSG), Asp183, Trp244, and Leu274.

The protein belongs to the class I-like SAM-binding methyltransferase superfamily. RKM5 family.

S-adenosyl-L-methionine-dependent protein-lysine N-methyltransferase that methylates 60S ribosomal protein L1. The polypeptide is Ribosomal lysine N-methyltransferase 5 (RKM5) (Candida glabrata (strain ATCC 2001 / BCRC 20586 / JCM 3761 / NBRC 0622 / NRRL Y-65 / CBS 138) (Yeast)).